The chain runs to 452 residues: NADH-quinone oxidoreductase subunit N 2 (452 aa).

Transmembrane regions (helical) follow at residues 6–26 (VLIP…YGFI), 33–53 (TYIL…FNFG), 70–90 (TLRI…YSDL), 97–117 (SVEY…MIVA), 120–140 (LLIL…LAGF), 154–174 (YFIL…FFYA), 194–214 (ILLG…LAPF), 232–252 (FLST…FLSI), 258–278 (IQDL…VLAL), 286–306 (MLAY…LLPE), 311–331 (ISLI…FAFI), 355–375 (FCII…GFIV), 387–407 (GYGS…FYYL), and 432–452 (ALSG…LLIF).

This sequence belongs to the complex I subunit 2 family. In terms of assembly, NDH-1 is composed of 14 different subunits. Subunits NuoA, H, J, K, L, M, N constitute the membrane sector of the complex.

The protein resides in the cell inner membrane. The enzyme catalyses a quinone + NADH + 5 H(+)(in) = a quinol + NAD(+) + 4 H(+)(out). NDH-1 shuttles electrons from NADH, via FMN and iron-sulfur (Fe-S) centers, to quinones in the respiratory chain. The immediate electron acceptor for the enzyme in this species is believed to be ubiquinone. Couples the redox reaction to proton translocation (for every two electrons transferred, four hydrogen ions are translocated across the cytoplasmic membrane), and thus conserves the redox energy in a proton gradient. The sequence is that of NADH-quinone oxidoreductase subunit N 2 from Thermodesulfovibrio yellowstonii (strain ATCC 51303 / DSM 11347 / YP87).